A 141-amino-acid chain; its full sequence is Hemoglobin subunit alpha-A (141 aa).

The 141-residue stretch at 1 to 141 (VLSAADKTNV…VGAVLTAKYR (141 aa)) folds into the Globin domain. Position 58 (H58) interacts with O2. H87 serves as a coordination point for heme b.

This sequence belongs to the globin family. In terms of assembly, heterotetramer of two alpha chains and two beta chains. Red blood cells.

In terms of biological role, involved in oxygen transport from the lung to the various peripheral tissues. The sequence is that of Hemoglobin subunit alpha-A (HBAA) from Cygnus olor (Mute swan).